A 458-amino-acid polypeptide reads, in one-letter code: Retinoic acid receptor gamma (458 aa).

Positions 1 to 89 (MATNKERLFA…PPPPPRVYKP (89 aa)) are modulating. Arginine 34 carries the post-translational modification Omega-N-methylarginine. The disordered stretch occupies residues 58-83 (MASLSVETQSTSSEEMVPSSPSPPPP). Over residues 62-71 (SVETQSTSSE) the composition is skewed to polar residues. 2 NR C4-type zinc fingers span residues 90–110 (CFVCNDKSSGYHYGVSSCEGC) and 126–150 (CHRDKNCIINKVTRNRCQYCRLQKC). The nuclear receptor DNA-binding region spans 90 to 155 (CFVCNDKSSG…RLQKCFEVGM (66 aa)). The tract at residues 156–184 (SKEAVRNDRNKKKKEVKEEGSPDSYELSP) is hinge. Residues 161 to 180 (RNDRNKKKKEVKEEGSPDSY) form a disordered region. Glycyl lysine isopeptide (Lys-Gly) (interchain with G-Cter in SUMO2) cross-links involve residues lysine 172 and lysine 401. The NR LBD domain occupies 185–419 (QLEELITKVS…PLIREMLENP (235 aa)). A disordered region spans residues 409-458 (PPLIREMLENPEMFEDDSSKPGPHPKASSEDEAPGGQGKRGQSPQPDQGP). The span at 448-458 (RGQSPQPDQGP) shows a compositional bias: polar residues.

The protein belongs to the nuclear hormone receptor family. NR1 subfamily. Homodimer. Heterodimer with a RXR molecule. Binds DNA preferentially as a RAR/RXR heterodimer. Forms a complex with PUS1 and the SRA1 RNA in the nucleus.

The protein resides in the nucleus. It localises to the cytoplasm. In terms of biological role, receptor for retinoic acid. Retinoic acid receptors bind as heterodimers to their target response elements in response to their ligands, all-trans or 9-cis retinoic acid, and regulate gene expression in various biological processes. The RAR/RXR heterodimers bind to the retinoic acid response elements (RARE) composed of tandem 5'-AGGTCA-3' sites known as DR1-DR5. In the absence of ligand, acts mainly as an activator of gene expression due to weak binding to corepressors. Required for limb bud development. In concert with RARA or RARB, required for skeletal growth, matrix homeostasis and growth plate function. This is Retinoic acid receptor gamma (Rarg) from Mus musculus (Mouse).